The primary structure comprises 563 residues: Tripeptidyl-peptidase 1 (563 aa).

Residues 1-19 (MRLRTCLLGLLALCVASKC) form the signal peptide. The propeptide at 20–195 (SYSPEPDQQR…PEPQVSGTVG (176 aa)) is removed in mature form. The cysteines at positions 111 and 122 are disulfide-linked. The region spanning 199–563 (GVTPSVIRQR…PALLKALIKP (365 aa)) is the Peptidase S53 domain. Asn210 and Asn222 each carry an N-linked (GlcNAc...) asparagine glycan. Residues Glu272 and Asp276 each act as charge relay system in the active site. Asn286, Asn313, and Asn443 each carry an N-linked (GlcNAc...) asparagine glycan. Intrachain disulfides connect Cys365–Cys526 and Cys522–Cys537. Ser475 (charge relay system) is an active-site residue. Ca(2+) contacts are provided by Asp517 and Val518. Residues Gly539, Gly541, and Asp543 each contribute to the Ca(2+) site.

Monomer. Interacts with CLN5. Interacts with CLN3. Ca(2+) is required as a cofactor. Activated by autocatalytic proteolytical processing upon acidification. N-glycosylation is required for processing and activity.

It is found in the lysosome. The protein localises to the melanosome. The catalysed reaction is Release of an N-terminal tripeptide from a polypeptide, but also has endopeptidase activity.. Its function is as follows. Lysosomal serine protease with tripeptidyl-peptidase I activity. May act as a non-specific lysosomal peptidase which generates tripeptides from the breakdown products produced by lysosomal proteinases. Requires substrates with an unsubstituted N-terminus. In Canis lupus familiaris (Dog), this protein is Tripeptidyl-peptidase 1 (TPP1).